A 321-amino-acid chain; its full sequence is MTPELRHMLRDDDLNHEEQKQVLELAIKFHHDRFYKQPFAGPQAVAVLFDKPSTRTRSSFSIGVAELGGYPLVIDKSGSQLGRGEPVADTARVLNRMAYGVVWRTFGQGRVEEMAKYSTHPVVNALTDDFHPCQILADFQTIAEHRGGVDNLKNQTIAYLGDAANNMANSYLLGGAVAGMDVRVAGPYGYLPRPDIVADAKRVAAETGGSILVTTDAKEAVKDADCVFTDTWVSMGEEAEYAIRSKPFWDYQVNTELMALAKPDALFQHCLPAYRGKEVTAEVIDGPQSVVWDEAENRLHAQKALLTWLTGKARGDESLLA.

Residues 53 to 56 (STRT), Gln-80, Arg-104, and 131 to 134 (HPCQ) contribute to the carbamoyl phosphate site. L-ornithine-binding positions include Asn-166, Asp-230, and 234 to 235 (SM). Residues 270-271 (CL) and Arg-298 each bind carbamoyl phosphate.

Belongs to the aspartate/ornithine carbamoyltransferase superfamily. OTCase family.

Its subcellular location is the cytoplasm. It carries out the reaction carbamoyl phosphate + L-ornithine = L-citrulline + phosphate + H(+). It participates in amino-acid biosynthesis; L-arginine biosynthesis; L-arginine from L-ornithine and carbamoyl phosphate: step 1/3. In terms of biological role, reversibly catalyzes the transfer of the carbamoyl group from carbamoyl phosphate (CP) to the N(epsilon) atom of ornithine (ORN) to produce L-citrulline. This chain is Ornithine carbamoyltransferase, found in Bifidobacterium longum (strain NCC 2705).